Here is a 128-residue protein sequence, read N- to C-terminus: Gastrotropin (128 aa).

Alanine 2 is subject to N-acetylalanine.

The protein belongs to the calycin superfamily. Fatty-acid binding protein (FABP) family. In terms of tissue distribution, expressed in ovary granulosa and luteal cells.

It is found in the cytoplasm. Its subcellular location is the membrane. In terms of biological role, binds to bile acids and is involved in enterohepatic bile acid metabolism. Required for efficient apical to basolateral transport of conjugated bile acids in ileal enterocytes. Stimulates gastric acid and pepsinogen secretion. The polypeptide is Gastrotropin (Fabp6) (Mus musculus (Mouse)).